Reading from the N-terminus, the 302-residue chain is Beta-casein (302 aa).

The first 15 residues, 1-15 (MKLLILTCLVALGFA), serve as a signal peptide directing secretion. A phosphoserine mark is found at Ser-23 and Ser-25. Tandem repeats lie at residues 144–151 (KREMLPIY), 152–159 (ERERLPAH), 160–167 (KRESLLAH), 168–175 (ERESLLAH), 176–182 (ERDILVP), 183–190 (QREMSFVP), 191–198 (EREFLFAS), 199–204 (ERVVLP), 205–214 (EQEKEILHND), 215–222 (EREVLAVH), 223–230 (KKEILPPF), 231–238 (EKEKVLPL), 241–247 (HRVVPLP), 248–255 (QREIVPPF), 256–262 (QRETLLP), and 263–269 (EEILPVN). The segment at 144-269 (KREMLPIYER…LLPEEILPVN (126 aa)) is 16 X approximate tandem repeats.

The protein belongs to the beta-casein family. Mammary gland specific. Secreted in milk.

The protein localises to the secreted. Important role in determination of the surface properties of the casein micelles. This is Beta-casein (CSN2) from Notamacropus eugenii (Tammar wallaby).